Here is a 185-residue protein sequence, read N- to C-terminus: GTP cyclohydrolase 1 (185 aa).

Zn(2+) is bound by residues C76, H79, and C147.

It belongs to the GTP cyclohydrolase I family. Toroid-shaped homodecamer, composed of two pentamers of five dimers.

The enzyme catalyses GTP + H2O = 7,8-dihydroneopterin 3'-triphosphate + formate + H(+). It functions in the pathway cofactor biosynthesis; 7,8-dihydroneopterin triphosphate biosynthesis; 7,8-dihydroneopterin triphosphate from GTP: step 1/1. The polypeptide is GTP cyclohydrolase 1 (Clostridium perfringens (strain ATCC 13124 / DSM 756 / JCM 1290 / NCIMB 6125 / NCTC 8237 / Type A)).